The sequence spans 493 residues: Glutamate--tRNA ligase (493 aa).

The short motif at 10–20 (PSPTGDPHVGT) is the 'HIGH' region element. The short motif at 251–255 (KLSKR) is the 'KMSKS' region element. ATP is bound at residue K254.

The protein belongs to the class-I aminoacyl-tRNA synthetase family. Glutamate--tRNA ligase type 1 subfamily. In terms of assembly, monomer.

Its subcellular location is the cytoplasm. It carries out the reaction tRNA(Glu) + L-glutamate + ATP = L-glutamyl-tRNA(Glu) + AMP + diphosphate. Functionally, catalyzes the attachment of glutamate to tRNA(Glu) in a two-step reaction: glutamate is first activated by ATP to form Glu-AMP and then transferred to the acceptor end of tRNA(Glu). In Pseudomonas putida (strain W619), this protein is Glutamate--tRNA ligase.